We begin with the raw amino-acid sequence, 319 residues long: Thioredoxin reductase (319 aa).

37–44 serves as a coordination point for FAD; sequence ERGVPGGQ. A disulfide bridge connects residues Cys-136 and Cys-139. Residue 279 to 288 participates in FAD binding; that stretch reads DVRAKSLRQI.

This sequence belongs to the class-II pyridine nucleotide-disulfide oxidoreductase family. Homodimer. The cofactor is FAD.

The protein localises to the cytoplasm. It carries out the reaction [thioredoxin]-dithiol + NADP(+) = [thioredoxin]-disulfide + NADPH + H(+). In Listeria innocua serovar 6a (strain ATCC BAA-680 / CLIP 11262), this protein is Thioredoxin reductase (trxB).